Reading from the N-terminus, the 475-residue chain is Chromosomal replication initiator protein DnaA (475 aa).

Positions 1-71 are domain I, interacts with DnaA modulators; sequence MTNDTWNEVR…RQLSAHGAGA (71 aa). A domain II region spans residues 71–133; that stretch reads ADRVKFTVSP…PAQPRELPGA (63 aa). The segment covering 107–127 has biased composition (low complexity); that stretch reads APAPVHHTAPAPAPVAAPAQP. The segment at 107 to 129 is disordered; that stretch reads APAPVHHTAPAPAPVAAPAQPRE. A domain III, AAA+ region region spans residues 134–355; the sequence is KLNPNFTFAN…GALTRLFAFA (222 aa). Residues G178, G180, K181, and T182 each coordinate ATP. The tract at residues 356 to 475 is domain IV, binds dsDNA; sequence DLVRREVTVD…AELLRRTLEA (120 aa).

The protein belongs to the DnaA family. In terms of assembly, oligomerizes as a right-handed, spiral filament on DNA at oriC.

It localises to the cytoplasm. Functionally, plays an essential role in the initiation and regulation of chromosomal replication. ATP-DnaA binds to the origin of replication (oriC) to initiate formation of the DNA replication initiation complex once per cell cycle. Binds the DnaA box (a 9 base pair repeat at the origin) and separates the double-stranded (ds)DNA. Forms a right-handed helical filament on oriC DNA; dsDNA binds to the exterior of the filament while single-stranded (ss)DNA is stabiized in the filament's interior. The ATP-DnaA-oriC complex binds and stabilizes one strand of the AT-rich DNA unwinding element (DUE), permitting loading of DNA polymerase. After initiation quickly degrades to an ADP-DnaA complex that is not apt for DNA replication. Binds acidic phospholipids. The chain is Chromosomal replication initiator protein DnaA from Jannaschia sp. (strain CCS1).